Reading from the N-terminus, the 74-residue chain is Small ribosomal subunit protein eS17 (74 aa).

It belongs to the eukaryotic ribosomal protein eS17 family.

This is Small ribosomal subunit protein eS17 from Ignicoccus hospitalis (strain KIN4/I / DSM 18386 / JCM 14125).